The primary structure comprises 293 residues: Acetyl-coenzyme A carboxylase carboxyl transferase subunit beta (293 aa).

The CoA carboxyltransferase N-terminal domain maps to 29-293 (LWVKCPECGQ…GCKAKKAAGK (265 aa)). Zn(2+) contacts are provided by cysteine 33, cysteine 36, cysteine 52, and cysteine 55. The C4-type zinc-finger motif lies at 33–55 (CPECGQVVYRKDLHANASVCSNC).

Belongs to the AccD/PCCB family. In terms of assembly, acetyl-CoA carboxylase is a heterohexamer composed of biotin carboxyl carrier protein (AccB), biotin carboxylase (AccC) and two subunits each of ACCase subunit alpha (AccA) and ACCase subunit beta (AccD). It depends on Zn(2+) as a cofactor.

It is found in the cytoplasm. The enzyme catalyses N(6)-carboxybiotinyl-L-lysyl-[protein] + acetyl-CoA = N(6)-biotinyl-L-lysyl-[protein] + malonyl-CoA. It functions in the pathway lipid metabolism; malonyl-CoA biosynthesis; malonyl-CoA from acetyl-CoA: step 1/1. In terms of biological role, component of the acetyl coenzyme A carboxylase (ACC) complex. Biotin carboxylase (BC) catalyzes the carboxylation of biotin on its carrier protein (BCCP) and then the CO(2) group is transferred by the transcarboxylase to acetyl-CoA to form malonyl-CoA. The protein is Acetyl-coenzyme A carboxylase carboxyl transferase subunit beta of Prochlorococcus marinus (strain MIT 9303).